The chain runs to 428 residues: Protein Wnt-8b (428 aa).

The first 22 residues, 1-22 (MFYTGSFWFIFFILPAIPFCHS), serve as a signal peptide directing secretion. Cys-54 and Cys-65 form a disulfide bridge. Residues Asn-123 and Asn-176 are each glycosylated (N-linked (GlcNAc...) asparagine). 10 cysteine pairs are disulfide-bonded: Cys-177–Cys-185, Cys-187–Cys-205, Cys-253–Cys-267, Cys-255–Cys-262, Cys-329–Cys-367, Cys-345–Cys-360, Cys-364–Cys-406, Cys-382–Cys-397, Cys-384–Cys-394, and Cys-389–Cys-390. Ser-259 carries O-palmitoleoyl serine lipidation. Asn-332 carries N-linked (GlcNAc...) asparagine glycosylation.

It belongs to the Wnt family. In terms of processing, palmitoleoylation is required for efficient binding to frizzled receptors. Depalmitoleoylation leads to Wnt signaling pathway inhibition. Proteolytic processing by tiki1 and tiki2 promotes oxidation and formation of large disulfide-bond oligomers, leading to inactivation of wnt8b. As to expression, in adults, in brain.

It localises to the secreted. The protein localises to the extracellular space. The protein resides in the extracellular matrix. Functionally, ligand for members of the frizzled family of seven transmembrane receptors. Plays a role in the initiation of dorsal axis development. May activate a Nieuwkoop center-like signaling pathway. This chain is Protein Wnt-8b (wnt8b), found in Xenopus laevis (African clawed frog).